Reading from the N-terminus, the 168-residue chain is Endoribonuclease YbeY (168 aa).

The Zn(2+) site is built by His-123, His-127, and His-133.

It belongs to the endoribonuclease YbeY family. Zn(2+) is required as a cofactor.

It localises to the cytoplasm. Single strand-specific metallo-endoribonuclease involved in late-stage 70S ribosome quality control and in maturation of the 3' terminus of the 16S rRNA. The protein is Endoribonuclease YbeY of Francisella tularensis subsp. tularensis (strain SCHU S4 / Schu 4).